A 275-amino-acid chain; its full sequence is Adenylate kinase 2 (275 aa).

The N-myristoyl glycine moiety is linked to residue glycine 2. The tract at residues 21–30 (KKKEKKKKKK) is required for cell membrane translocation but dispensable for cell membrane localization. Residue 39 to 44 (GSGKDT) participates in ATP binding. The NMP stretch occupies residues 59 to 97 (CISKLLKEYKEEYNKENVLNEEENYFDEIEKCMIDGSLV). Residues 95–97 (SLV), 126–129 (GFPR), and glutamine 133 each bind AMP. Arginine 164 is an ATP binding site. The interval 165–214 (IIDPITNISYNENIIQIIKKKREGQELSDKEQKQLIIDNHLYNNLSNDIL) is LID. Arginine 220 and arginine 231 together coordinate AMP.

The protein belongs to the adenylate kinase family. In terms of assembly, monomer. Oligomer. Heterodimer composed of NMT and AK2; AK2 myristoylation stabilizes the complex. Myristoylation is required for cell membrane localization. In terms of processing, may be palmitoylated at Cys-4 which stabilizes cell membrane localization of the myristoylated protein.

The protein localises to the parasitophorous vacuole membrane. The catalysed reaction is AMP + ATP = 2 ADP. Catalyzes the reversible transfer of the terminal phosphate group between ATP and AMP. Has very low activity with CTP, GTP, ITP and UTP and no activity with GMP, UMP or IMP in vitro. This Plasmodium falciparum (isolate 3D7) protein is Adenylate kinase 2.